The primary structure comprises 264 residues: Indole-3-glycerol phosphate synthase (264 aa).

Belongs to the TrpC family.

It catalyses the reaction 1-(2-carboxyphenylamino)-1-deoxy-D-ribulose 5-phosphate + H(+) = (1S,2R)-1-C-(indol-3-yl)glycerol 3-phosphate + CO2 + H2O. The protein operates within amino-acid biosynthesis; L-tryptophan biosynthesis; L-tryptophan from chorismate: step 4/5. The polypeptide is Indole-3-glycerol phosphate synthase (Carboxydothermus hydrogenoformans (strain ATCC BAA-161 / DSM 6008 / Z-2901)).